Reading from the N-terminus, the 476-residue chain is Bifunctional protein HldE (476 aa).

Residues 1–319 are ribokinase; sequence MAQYSAQFPH…NAIHGRTVSG (319 aa). 195 to 198 is an ATP binding site; it reads NMSE. Residue aspartate 264 is part of the active site. Positions 344 to 476 are cytidylyltransferase; the sequence is MTNGCFDILH…VIKKIRDLKD (133 aa).

It in the N-terminal section; belongs to the carbohydrate kinase PfkB family. In the C-terminal section; belongs to the cytidylyltransferase family. Homodimer.

It catalyses the reaction D-glycero-beta-D-manno-heptose 7-phosphate + ATP = D-glycero-beta-D-manno-heptose 1,7-bisphosphate + ADP + H(+). It carries out the reaction D-glycero-beta-D-manno-heptose 1-phosphate + ATP + H(+) = ADP-D-glycero-beta-D-manno-heptose + diphosphate. The protein operates within nucleotide-sugar biosynthesis; ADP-L-glycero-beta-D-manno-heptose biosynthesis; ADP-L-glycero-beta-D-manno-heptose from D-glycero-beta-D-manno-heptose 7-phosphate: step 1/4. Its pathway is nucleotide-sugar biosynthesis; ADP-L-glycero-beta-D-manno-heptose biosynthesis; ADP-L-glycero-beta-D-manno-heptose from D-glycero-beta-D-manno-heptose 7-phosphate: step 3/4. In terms of biological role, catalyzes the phosphorylation of D-glycero-D-manno-heptose 7-phosphate at the C-1 position to selectively form D-glycero-beta-D-manno-heptose-1,7-bisphosphate. Catalyzes the ADP transfer from ATP to D-glycero-beta-D-manno-heptose 1-phosphate, yielding ADP-D-glycero-beta-D-manno-heptose. The protein is Bifunctional protein HldE of Actinobacillus succinogenes (strain ATCC 55618 / DSM 22257 / CCUG 43843 / 130Z).